A 350-amino-acid chain; its full sequence is Autophagy-related protein 3 (350 aa).

A flexible region region spans residues 85–166 (NFAGDAGLEE…EEDDEAIIRD (82 aa)). The tract at residues 97-171 (VDDGDEFKGS…AIIRDTDASG (75 aa)) is disordered. A compositionally biased stretch (basic and acidic residues) spans 102-113 (EFKGSKGDDDGW). A compositionally biased stretch (acidic residues) spans 146-161 (DDDDDIPDMEDEEDDE). Residue C244 is the Glycyl thioester intermediate of the active site. Residues 248-326 (PVMKTLLDRA…DQEVAIRVDQ (79 aa)) form a handle region region. Residues K262 and K267 each carry the N6-acetyllysine modification.

The protein belongs to the ATG3 family. Monomer. Interacts with ATG8 through an intermediate thioester bond through the C-terminal Gly of ATG8. Also interacts with the 40 amino acid C-terminal region of the E1-like ATG7 enzyme. Also interacts with the ATG12-ATG5 conjugate. Interacts with HAT1. Post-translationally, acetylated by HAT1 at Lys-262 and Lys-267, which affects the interaction with ATG8 and prevents autophagy during both appressorium development and nutrient starvation.

It localises to the preautophagosomal structure. The protein localises to the cytoplasm. Its function is as follows. E2 conjugating enzyme required for the cytoplasm to vacuole transport (Cvt) and autophagy. Required for selective autophagic degradation of the nucleus (nucleophagy) as well as for mitophagy which contributes to regulate mitochondrial quantity and quality by eliminating the mitochondria to a basal level to fulfill cellular energy requirements and preventing excess ROS production. Responsible for the E2-like covalent binding of phosphatidylethanolamine to the C-terminal Gly of ATG8. The ATG12-ATG5 conjugate plays a role of an E3 and promotes the transfer of ATG8 from ATG3 to phosphatidylethanolamine (PE). This step is required for the membrane association of ATG8. The formation of the ATG8-phosphatidylethanolamine conjugate is essential for autophagy and for the cytoplasm to vacuole transport (Cvt). The ATG8-PE conjugate mediates tethering between adjacent membranes and stimulates membrane hemifusion, leading to expansion of the autophagosomal membrane during autophagy. Plays a role in appressorium formation and pathogenicity. The sequence is that of Autophagy-related protein 3 from Pyricularia oryzae (strain 70-15 / ATCC MYA-4617 / FGSC 8958) (Rice blast fungus).